Reading from the N-terminus, the 242-residue chain is DNA repair protein RecO (242 aa).

It belongs to the RecO family.

Involved in DNA repair and RecF pathway recombination. This Wolbachia pipientis subsp. Culex pipiens (strain wPip) protein is DNA repair protein RecO.